A 374-amino-acid polypeptide reads, in one-letter code: tRNA N6-adenosine threonylcarbamoyltransferase (374 aa).

The Fe cation site is built by H117 and H121. Residues 140–144 (LVSGG), D174, G187, D191, and N283 each bind substrate. D311 is a Fe cation binding site. The segment covering 337–352 (ADSSLPVTEPHVPGQG) has biased composition (low complexity). The disordered stretch occupies residues 337-374 (ADSSLPVTEPHVPGQGHPHGHPHGHDHVHEVSKENLYS). Residues 359-374 (HGHDHVHEVSKENLYS) show a composition bias toward basic and acidic residues.

The protein belongs to the KAE1 / TsaD family. Requires Fe(2+) as cofactor.

The protein resides in the cytoplasm. It carries out the reaction L-threonylcarbamoyladenylate + adenosine(37) in tRNA = N(6)-L-threonylcarbamoyladenosine(37) in tRNA + AMP + H(+). Required for the formation of a threonylcarbamoyl group on adenosine at position 37 (t(6)A37) in tRNAs that read codons beginning with adenine. Is involved in the transfer of the threonylcarbamoyl moiety of threonylcarbamoyl-AMP (TC-AMP) to the N6 group of A37, together with TsaE and TsaB. TsaD likely plays a direct catalytic role in this reaction. This is tRNA N6-adenosine threonylcarbamoyltransferase from Streptomyces coelicolor (strain ATCC BAA-471 / A3(2) / M145).